We begin with the raw amino-acid sequence, 416 residues long: Adenylosuccinate synthetase (416 aa).

GTP is bound by residues 13–19 and 41–43; these read GDEGKGK and GHT. Asp14 acts as the Proton acceptor in catalysis. Mg(2+) is bound by residues Asp14 and Gly41. Residues 14–17, 39–42, Thr126, Arg140, Gln220, Thr235, and Arg299 contribute to the IMP site; these read DEGK and NAGH. Residue His42 is the Proton donor of the active site. 295–301 provides a ligand contact to substrate; the sequence is VSTGRKR. GTP is bound by residues Arg301, 327 to 329, and 405 to 407; these read KLD and STS.

Belongs to the adenylosuccinate synthetase family. In terms of assembly, homodimer. Mg(2+) is required as a cofactor.

The protein localises to the cytoplasm. The enzyme catalyses IMP + L-aspartate + GTP = N(6)-(1,2-dicarboxyethyl)-AMP + GDP + phosphate + 2 H(+). It functions in the pathway purine metabolism; AMP biosynthesis via de novo pathway; AMP from IMP: step 1/2. Functionally, plays an important role in the de novo pathway of purine nucleotide biosynthesis. Catalyzes the first committed step in the biosynthesis of AMP from IMP. This is Adenylosuccinate synthetase from Campylobacter lari (strain RM2100 / D67 / ATCC BAA-1060).